Here is a 106-residue protein sequence, read N- to C-terminus: Programmed cell death activator egl-1 (106 aa).

Positions 73–81 (LAAMCDDFD) are BH3-like.

Interacts with ced-9; the interaction results in ced-4 release from the ced-4/ced-9 complex. Interaction with ced-9 may enhance interaction of ced-9 with drp-1, but not with ced-4. A ced-9/egl-1 complex may recruit drp-1 to the mitochondrial surface.

The protein resides in the synapse. Its function is as follows. Plays a major role in programmed cell death (PCD or apoptosis) by negatively regulating ced-9. Binds to and directly inhibits the activity of ced-9, releasing the cell death activator ced-4 from a ced-9/ced-4 containing protein complex and allowing ced-4 to activate the cell-killing caspase ced-3. Required to activate programmed cell death in the sister cells of the serotonergic neurosecretory motor (NSM) neurons during embryogenesis. Required to activate programmed cell death in the sister cells of the M4 motor neuron and I1 pharyngeal neuron during embryogenesis. During larval development, required for the elimination of transient presynaptic components upstream of ced-9, ced-4 and ced-3 apoptotic pathway. Together with ain-1, a component of the miRNA-induced-silencing complex (miRISC), and probably upstream of ced-3 and ced-4, regulates temporal cell fate patterning during larval development. Has been shown in two studies to be dispensable in mitochondrial dynamics and morphology during early embryonic development. However, one study shows that during larval development, egl-1 is involved in modulating mitochondrial dynamics, perhaps acting by stabilizing the interaction between ced-9 and drp-1 in order to promote mitochondrial fission. Involved in inducing mitochondrial fragmentation during apoptosis, probably acting via ced-9 and dynamin-related protein drp-1. This is Programmed cell death activator egl-1 from Caenorhabditis elegans.